The sequence spans 393 residues: Phospho-N-acetylmuramoyl-pentapeptide-transferase (393 aa).

10 helical membrane passes run 29–49 (RAVMAAMTALLIGLALGPIVI), 75–95 (TPTMGGALILLAIAISTLLWF), 101–121 (FVWIVMIVTFGFGAIGWVDDW), 138–158 (YFWQSLIGLVAALYLAFSVSE), 193–213 (SISYPLGVFGFIFLTYVVIVG), 226–246 (GLAIMPVVMVGSALGIFAYAT), 263–283 (AGELMIFCAAMAGAGLAFLWF), 290–310 (VFMGDVGALALGGALGTIAVI), 315–335 (VVLAIMGGIFVLEALSVMAQV), and 370–390 (QVVVRFWIITMLLCLVGLSSL).

The protein belongs to the glycosyltransferase 4 family. MraY subfamily. Mg(2+) serves as cofactor.

Its subcellular location is the cell inner membrane. It catalyses the reaction UDP-N-acetyl-alpha-D-muramoyl-L-alanyl-gamma-D-glutamyl-meso-2,6-diaminopimeloyl-D-alanyl-D-alanine + di-trans,octa-cis-undecaprenyl phosphate = di-trans,octa-cis-undecaprenyl diphospho-N-acetyl-alpha-D-muramoyl-L-alanyl-D-glutamyl-meso-2,6-diaminopimeloyl-D-alanyl-D-alanine + UMP. Its pathway is cell wall biogenesis; peptidoglycan biosynthesis. In terms of biological role, catalyzes the initial step of the lipid cycle reactions in the biosynthesis of the cell wall peptidoglycan: transfers peptidoglycan precursor phospho-MurNAc-pentapeptide from UDP-MurNAc-pentapeptide onto the lipid carrier undecaprenyl phosphate, yielding undecaprenyl-pyrophosphoryl-MurNAc-pentapeptide, known as lipid I. The protein is Phospho-N-acetylmuramoyl-pentapeptide-transferase of Methylibium petroleiphilum (strain ATCC BAA-1232 / LMG 22953 / PM1).